We begin with the raw amino-acid sequence, 131 residues long: ATP synthase epsilon chain, chloroplastic (131 aa).

This sequence belongs to the ATPase epsilon chain family. As to quaternary structure, F-type ATPases have 2 components, CF(1) - the catalytic core - and CF(0) - the membrane proton channel. CF(1) has five subunits: alpha(3), beta(3), gamma(1), delta(1), epsilon(1). CF(0) has three main subunits: a, b and c.

The protein localises to the plastid. Its subcellular location is the chloroplast thylakoid membrane. Produces ATP from ADP in the presence of a proton gradient across the membrane. This chain is ATP synthase epsilon chain, chloroplastic, found in Oltmannsiellopsis viridis (Marine flagellate).